Here is a 253-residue protein sequence, read N- to C-terminus: Major prion protein (253 aa).

The first 22 residues, 1-22 (MANLGCWMLVLFVATWSDLGLC), serve as a signal peptide directing secretion. The interaction with ADGRG6 stretch occupies residues 23-38 (KKRPKPGGWNTGGSRY). An interaction with GRB2, ERI3 and SYN1 region spans residues 23–230 (KKRPKPGGWN…ESQAYYQRGS (208 aa)). Residues 26 to 108 (PKPGGWNTGG…WNKPSKPKTS (83 aa)) are disordered. A run of 5 repeats spans residues 51–59 (PQGGGGWGQ), 60–67 (PHGGGWGQ), 68–75 (PHGGGWGQ), 76–83 (PHGGGWGQ), and 84–91 (PHGGGWGQ). The tract at residues 51 to 91 (PQGGGGWGQPHGGGWGQPHGGGWGQPHGGGWGQPHGGGWGQ) is 5 X 8 AA tandem repeats of P-H-G-G-G-W-G-Q. Positions 52 to 95 (QGGGGWGQPHGGGWGQPHGGGWGQPHGGGWGQPHGGGWGQGGGT) are enriched in gly residues. The Cu(2+) site is built by His-61, Gly-62, Gly-63, His-69, Gly-70, Gly-71, His-77, Gly-78, Gly-79, His-85, Gly-86, and Gly-87. The cysteines at positions 179 and 214 are disulfide-linked. 2 N-linked (GlcNAc...) asparagine glycosylation sites follow: Asn-181 and Asn-197. Ser-230 carries the GPI-anchor amidated serine lipid modification. Positions 231 to 253 (SMVLFSSPPVILLISFLIFLIVG) are cleaved as a propeptide — removed in mature form.

This sequence belongs to the prion family. Monomer and homodimer. Has a tendency to aggregate into amyloid fibrils containing a cross-beta spine, formed by a steric zipper of superposed beta-strands. Soluble oligomers may represent an intermediate stage on the path to fibril formation. Copper binding may promote oligomerization. Interacts with GRB2, APP, ERI3/PRNPIP and SYN1. Mislocalized cytosolically exposed PrP interacts with MGRN1; this interaction alters MGRN1 subcellular location and causes lysosomal enlargement. Interacts with APP. Interacts with KIAA1191. Interacts with ADGRG6.

The protein localises to the cell membrane. It is found in the golgi apparatus. Its function is as follows. Its primary physiological function is unclear. May play a role in neuronal development and synaptic plasticity. May be required for neuronal myelin sheath maintenance. May promote myelin homeostasis through acting as an agonist for ADGRG6 receptor. May play a role in iron uptake and iron homeostasis. Soluble oligomers are toxic to cultured neuroblastoma cells and induce apoptosis (in vitro). Association with GPC1 (via its heparan sulfate chains) targets PRNP to lipid rafts. Also provides Cu(2+) or Zn(2+) for the ascorbate-mediated GPC1 deaminase degradation of its heparan sulfate side chains. The polypeptide is Major prion protein (PRNP) (Colobus guereza (Mantled guereza)).